The sequence spans 521 residues: 2-isopropylmalate synthase (521 aa).

The 263-residue stretch at 12 to 274 (VIIFDTTLRD…WNKIDTTMLT (263 aa)) folds into the Pyruvate carboxyltransferase domain. Positions 21, 209, 211, and 245 each coordinate Mn(2+). A regulatory domain region spans residues 398 to 521 (KLVSLTVIAG…DMAAPAAAAS (124 aa)).

This sequence belongs to the alpha-IPM synthase/homocitrate synthase family. LeuA type 1 subfamily. Homodimer. Mn(2+) is required as a cofactor.

It is found in the cytoplasm. The catalysed reaction is 3-methyl-2-oxobutanoate + acetyl-CoA + H2O = (2S)-2-isopropylmalate + CoA + H(+). It participates in amino-acid biosynthesis; L-leucine biosynthesis; L-leucine from 3-methyl-2-oxobutanoate: step 1/4. Catalyzes the condensation of the acetyl group of acetyl-CoA with 3-methyl-2-oxobutanoate (2-ketoisovalerate) to form 3-carboxy-3-hydroxy-4-methylpentanoate (2-isopropylmalate). This is 2-isopropylmalate synthase from Rhodopseudomonas palustris (strain BisA53).